Consider the following 212-residue polypeptide: Large ribosomal subunit protein uL3 (212 aa).

Residues 127 to 161 (NFKRGPMAHGSKNHRLPGSTGAGTTPGRVFPGKRM) form a disordered region.

This sequence belongs to the universal ribosomal protein uL3 family. Part of the 50S ribosomal subunit. Forms a cluster with proteins L14 and L19.

One of the primary rRNA binding proteins, it binds directly near the 3'-end of the 23S rRNA, where it nucleates assembly of the 50S subunit. The polypeptide is Large ribosomal subunit protein uL3 (Thermosynechococcus vestitus (strain NIES-2133 / IAM M-273 / BP-1)).